Consider the following 435-residue polypeptide: D-amino acid dehydrogenase (435 aa).

Val3–Trp17 contributes to the FAD binding site.

This sequence belongs to the DadA oxidoreductase family. It depends on FAD as a cofactor.

The catalysed reaction is a D-alpha-amino acid + A + H2O = a 2-oxocarboxylate + AH2 + NH4(+). It participates in amino-acid degradation; D-alanine degradation; NH(3) and pyruvate from D-alanine: step 1/1. Functionally, oxidative deamination of D-amino acids. In Xylella fastidiosa (strain 9a5c), this protein is D-amino acid dehydrogenase.